The following is a 46-amino-acid chain: uncharacterized protein (46 aa).

This is an uncharacterized protein from Saccharomyces cerevisiae (strain ATCC 204508 / S288c) (Baker's yeast).